An 827-amino-acid polypeptide reads, in one-letter code: Probable inorganic carbon transporter subunit DabA2 (827 aa).

Residues C351, D353, H524, and C539 each contribute to the Zn(2+) site.

Belongs to the inorganic carbon transporter (TC 9.A.2) DabA family. Forms a complex with DabB2, possibly a heterodimer. Zn(2+) is required as a cofactor.

The protein resides in the cell inner membrane. Uptake of inorganic carbon by cells in the presence of thiosulphate is fully inhibited by the uncouplers carbonyl cyanide m-chlorophenyl hydrazone (CCCP), carbonyl cyanide p-trifluoromethoxyphenyl hydrazone (FCCP), S13 or SF6847. Not inhibited by the ATPase inhibitor N,N-dicyclohexylcarbodiimide (DCCD). Inorganic carbon uptake is inhibited by the ionophore CCCP, suggesting uptake is coupled to a cation gradient. Part of an energy-coupled inorganic carbon pump; its substrate may be carbon dioxide. Expression of both dabA2 and dabB2 (DAB2) restores growth in ambient air to E.coli deleted of its carbonic anhydrase genes (called CAfree, deletion of 'can' and 'cynT'); neither dabA2 or dabB2 alone is sufficient. Rescue is pH-independent, suggesting it transports CO(2) and not carbonate ions. Together the genes allow greater than normal uptake of inorganic carbon by E.coli. Uptake of carbon dioxide rather than bicarbonate has been suggested based on kinetic calculations. The sequence is that of Probable inorganic carbon transporter subunit DabA2 from Halothiobacillus neapolitanus (strain ATCC 23641 / c2) (Thiobacillus neapolitanus).